Reading from the N-terminus, the 82-residue chain is UPF0180 protein BC_1394 (82 aa).

Belongs to the UPF0180 family.

The sequence is that of UPF0180 protein BC_1394 from Bacillus cereus (strain ATCC 14579 / DSM 31 / CCUG 7414 / JCM 2152 / NBRC 15305 / NCIMB 9373 / NCTC 2599 / NRRL B-3711).